Reading from the N-terminus, the 401-residue chain is Renin-2 (401 aa).

The first 25 residues, 1–25, serve as a signal peptide directing secretion; it reads MDRRRMPLWALLLLWSPCTFSLPTG. Residues 26-63 constitute a propeptide, activation peptide; sequence TTFERIPLKKMPSVREILEERGVDMTRLSAEWDVFTKR. The region spanning 83 to 398 is the Peptidase A1 domain; that stretch reads YYGEIGIGTP…DRHNNRIGFA (316 aa). Residue aspartate 101 is part of the active site. Cystine bridges form between cysteine 114-cysteine 121 and cysteine 277-cysteine 281. Residue aspartate 286 is part of the active site. Cysteine 320 and cysteine 357 are disulfide-bonded.

The protein belongs to the peptidase A1 family. In terms of assembly, dimer of a heavy chain and a light chain joined by a disulfide bond. As to expression, submandibular gland.

The protein resides in the secreted. The catalysed reaction is Cleavage of Leu-|-Xaa bond in angiotensinogen to generate angiotensin I.. Its function is as follows. Renin is a highly specific endopeptidase, related to pepsin, whose only known function is to generate angiotensin I from angiotensinogen in the plasma, initiating a cascade of reactions that produce an elevation of blood pressure and increased sodium retention by the kidney. This chain is Renin-2, found in Mus musculus (Mouse).